Here is a 307-residue protein sequence, read N- to C-terminus: HPr kinase/phosphorylase (307 aa).

Catalysis depends on residues H136 and K157. 151–158 provides a ligand contact to ATP; sequence GESGIGKS. S158 contributes to the Mg(2+) binding site. D175 acts as the Proton acceptor; for phosphorylation activity. Proton donor; for dephosphorylation activity in catalysis. An important for the catalytic mechanism of both phosphorylation and dephosphorylation region spans residues 198-207; it reads LEVRGMGIID. E199 provides a ligand contact to Mg(2+). R240 is an active-site residue. Positions 261 to 266 are important for the catalytic mechanism of dephosphorylation; the sequence is PIRPGR.

It belongs to the HPrK/P family. As to quaternary structure, homohexamer. Requires Mg(2+) as cofactor.

It carries out the reaction [HPr protein]-L-serine + ATP = [HPr protein]-O-phospho-L-serine + ADP + H(+). The enzyme catalyses [HPr protein]-O-phospho-L-serine + phosphate + H(+) = [HPr protein]-L-serine + diphosphate. Functionally, catalyzes the ATP- as well as the pyrophosphate-dependent phosphorylation of a specific serine residue in HPr, a phosphocarrier protein of the phosphoenolpyruvate-dependent sugar phosphotransferase system (PTS). HprK/P also catalyzes the pyrophosphate-producing, inorganic phosphate-dependent dephosphorylation (phosphorolysis) of seryl-phosphorylated HPr (P-Ser-HPr). The two antagonistic activities of HprK/P are regulated by several intracellular metabolites, which change their concentration in response to the absence or presence of rapidly metabolisable carbon sources (glucose, fructose, etc.) in the growth medium. Therefore, by controlling the phosphorylation state of HPr, HPrK/P is a sensor enzyme that plays a major role in the regulation of carbon metabolism and sugar transport: it mediates carbon catabolite repression (CCR), and regulates PTS-catalyzed carbohydrate uptake and inducer exclusion. The chain is HPr kinase/phosphorylase from Clostridium novyi (strain NT).